The sequence spans 1011 residues: Phosphoenolpyruvate carboxylase (1011 aa).

Active-site residues include His207 and Lys658.

The protein belongs to the PEPCase type 1 family. Mg(2+) is required as a cofactor.

It carries out the reaction oxaloacetate + phosphate = phosphoenolpyruvate + hydrogencarbonate. Its function is as follows. Forms oxaloacetate, a four-carbon dicarboxylic acid source for the tricarboxylic acid cycle. In Thermosynechococcus vestitus (strain NIES-2133 / IAM M-273 / BP-1), this protein is Phosphoenolpyruvate carboxylase (ppc).